The chain runs to 128 residues: 3-aminoacrylate deaminase RutC (128 aa).

This sequence belongs to the RutC family.

It carries out the reaction (Z)-3-aminoacrylate + H2O + H(+) = 3-oxopropanoate + NH4(+). In terms of biological role, involved in pyrimidine catabolism. Catalyzes the deamination of 3-aminoacrylate to malonic semialdehyde, a reaction that can also occur spontaneously. RutC may facilitate the reaction and modulate the metabolic fitness, rather than catalyzing essential functions. This Azorhizobium caulinodans (strain ATCC 43989 / DSM 5975 / JCM 20966 / LMG 6465 / NBRC 14845 / NCIMB 13405 / ORS 571) protein is 3-aminoacrylate deaminase RutC.